A 543-amino-acid polypeptide reads, in one-letter code: Carboxypeptidase Y homolog A (543 aa).

Residues 1–17 form the signal peptide; sequence MKFLTTGLLATAALAAA. The propeptide occupies 18 to 124; it reads QEQQVLQAED…KLHNYDLRVK (107 aa). 5 cysteine pairs are disulfide-bonded: Cys179–Cys419, Cys313–Cys327, Cys337–Cys360, Cys344–Cys353, and Cys382–Cys389. Asn210 carries an N-linked (GlcNAc...) asparagine glycan. Ser266 is a catalytic residue. Asp458 is a catalytic residue. Asn509 is a glycosylation site (N-linked (GlcNAc...) asparagine). His520 is an active-site residue.

The protein belongs to the peptidase S10 family.

The protein localises to the vacuole. It catalyses the reaction Release of a C-terminal amino acid with broad specificity.. Its function is as follows. Vacuolar carboxypeptidase involved in degradation of small peptides. Digests preferentially peptides containing an aliphatic or hydrophobic residue in P1' position, as well as methionine, leucine or phenylalanine in P1 position of ester substrate. This Trichophyton equinum (Horse ringworm fungus) protein is Carboxypeptidase Y homolog A (CPYA).